The following is a 207-amino-acid chain: uncharacterized protein (207 aa).

The first 19 residues, 1–19 (MRFNVSFLLSLLLPTLAFA), serve as a signal peptide directing secretion.

This sequence to P.multocida PM1509.

This is an uncharacterized protein from Pasteurella multocida (strain Pm70).